We begin with the raw amino-acid sequence, 378 residues long: Cytochrome b (378 aa).

4 helical membrane passes run 33–53 (FGSL…FLAM), 77–98 (WMIR…FLHT), 113–133 (WNIG…GYVL), and 178–198 (FFTF…IHLL). Heme b-binding residues include His83 and His97. 2 residues coordinate heme b: His182 and His196. Position 201 (His201) interacts with a ubiquinone. Helical transmembrane passes span 226–246 (TKDI…TLFT), 288–308 (LGGV…PATH), 320–340 (ITQI…WIGG), and 347–366 (FEAI…TLIP).

The protein belongs to the cytochrome b family. In terms of assembly, the cytochrome bc1 complex contains 11 subunits: 3 respiratory subunits (MT-CYB, CYC1 and UQCRFS1), 2 core proteins (UQCRC1 and UQCRC2) and 6 low-molecular weight proteins (UQCRH/QCR6, UQCRB/QCR7, UQCRQ/QCR8, UQCR10/QCR9, UQCR11/QCR10 and a cleavage product of UQCRFS1). This cytochrome bc1 complex then forms a dimer. It depends on heme b as a cofactor.

The protein localises to the mitochondrion inner membrane. In terms of biological role, component of the ubiquinol-cytochrome c reductase complex (complex III or cytochrome b-c1 complex) that is part of the mitochondrial respiratory chain. The b-c1 complex mediates electron transfer from ubiquinol to cytochrome c. Contributes to the generation of a proton gradient across the mitochondrial membrane that is then used for ATP synthesis. The chain is Cytochrome b (MT-CYB) from Cebus albifrons (White-fronted capuchin).